The primary structure comprises 317 residues: uncharacterized protein (317 aa).

The next 7 helical transmembrane spans lie at 18 to 38 (FWLISLVVAFLPLGLYGLVII), 58 to 78 (IILSWMLFFLWFNVIVNGFIF), 92 to 112 (FLGSFIYSGGNNFGGVSWWSF), 130 to 150 (LFSASFLLTTSSSIYELAWAV), 159 to 179 (LFHIKVQPISILLAVIFKLLP), 202 to 222 (CSFLNPFKIKTLFIPVLLSTV), and 252 to 272 (NLLNGVFLLVGLLLFSILLIA).

It belongs to the CbiQ family.

It localises to the cell membrane. This is an uncharacterized protein from Mycoplasma genitalium (strain ATCC 33530 / DSM 19775 / NCTC 10195 / G37) (Mycoplasmoides genitalium).